The sequence spans 349 residues: Protein-glutamate methylesterase/protein-glutamine glutaminase (349 aa).

Residues 2–118 (RVLVVDDSAL…VDLSSVAQEL (117 aa)) enclose the Response regulatory domain. Position 52 is a 4-aspartylphosphate (Asp52). The region spanning 159–345 (VLIGSSTGGP…EEIVRFLEVK (187 aa)) is the CheB-type methylesterase domain. Catalysis depends on residues Ser164, His191, and Asp287.

It belongs to the CheB family. Phosphorylated by CheA. Phosphorylation of the N-terminal regulatory domain activates the methylesterase activity.

It localises to the cytoplasm. It catalyses the reaction [protein]-L-glutamate 5-O-methyl ester + H2O = L-glutamyl-[protein] + methanol + H(+). It carries out the reaction L-glutaminyl-[protein] + H2O = L-glutamyl-[protein] + NH4(+). Functionally, involved in chemotaxis. Part of a chemotaxis signal transduction system that modulates chemotaxis in response to various stimuli. Catalyzes the demethylation of specific methylglutamate residues introduced into the chemoreceptors (methyl-accepting chemotaxis proteins or MCP) by CheR. Also mediates the irreversible deamidation of specific glutamine residues to glutamic acid. This is Protein-glutamate methylesterase/protein-glutamine glutaminase from Archaeoglobus fulgidus (strain ATCC 49558 / DSM 4304 / JCM 9628 / NBRC 100126 / VC-16).